Consider the following 150-residue polypeptide: 3-hydroxyacyl-[acyl-carrier-protein] dehydratase FabZ (150 aa).

Residue histidine 54 is part of the active site.

It belongs to the thioester dehydratase family. FabZ subfamily.

It is found in the cytoplasm. The catalysed reaction is a (3R)-hydroxyacyl-[ACP] = a (2E)-enoyl-[ACP] + H2O. Its function is as follows. Involved in unsaturated fatty acids biosynthesis. Catalyzes the dehydration of short chain beta-hydroxyacyl-ACPs and long chain saturated and unsaturated beta-hydroxyacyl-ACPs. The sequence is that of 3-hydroxyacyl-[acyl-carrier-protein] dehydratase FabZ from Vibrio vulnificus (strain CMCP6).